Here is a 209-residue protein sequence, read N- to C-terminus: Uracil phosphoribosyltransferase (209 aa).

5-phospho-alpha-D-ribose 1-diphosphate is bound by residues R79, R104, and 131–139 (DPMLATGGS). Residues I194 and 199 to 201 (GDA) contribute to the uracil site. D200 is a 5-phospho-alpha-D-ribose 1-diphosphate binding site.

Belongs to the UPRTase family. Requires Mg(2+) as cofactor.

The enzyme catalyses UMP + diphosphate = 5-phospho-alpha-D-ribose 1-diphosphate + uracil. It functions in the pathway pyrimidine metabolism; UMP biosynthesis via salvage pathway; UMP from uracil: step 1/1. With respect to regulation, allosterically activated by GTP. In terms of biological role, catalyzes the conversion of uracil and 5-phospho-alpha-D-ribose 1-diphosphate (PRPP) to UMP and diphosphate. This is Uracil phosphoribosyltransferase from Francisella tularensis subsp. novicida (strain U112).